The sequence spans 386 residues: Succinate--CoA ligase [ADP-forming] subunit beta (386 aa).

Residues Lys-46, Glu-99, Ala-102, and Glu-107 each contribute to the ATP site. Positions 199 and 213 each coordinate Mg(2+). Substrate is bound by residues Asn-264 and 321-323 (GIM).

The protein belongs to the succinate/malate CoA ligase beta subunit family. As to quaternary structure, heterotetramer of two alpha and two beta subunits. The cofactor is Mg(2+).

It catalyses the reaction succinate + ATP + CoA = succinyl-CoA + ADP + phosphate. The enzyme catalyses GTP + succinate + CoA = succinyl-CoA + GDP + phosphate. Its pathway is carbohydrate metabolism; tricarboxylic acid cycle; succinate from succinyl-CoA (ligase route): step 1/1. Its function is as follows. Succinyl-CoA synthetase functions in the citric acid cycle (TCA), coupling the hydrolysis of succinyl-CoA to the synthesis of either ATP or GTP and thus represents the only step of substrate-level phosphorylation in the TCA. The beta subunit provides nucleotide specificity of the enzyme and binds the substrate succinate, while the binding sites for coenzyme A and phosphate are found in the alpha subunit. This chain is Succinate--CoA ligase [ADP-forming] subunit beta, found in Orientia tsutsugamushi (strain Boryong) (Rickettsia tsutsugamushi).